The chain runs to 222 residues: Probable transaldolase (222 aa).

Residue lysine 91 is the Schiff-base intermediate with substrate of the active site.

It belongs to the transaldolase family. Type 3B subfamily.

The protein resides in the cytoplasm. The catalysed reaction is D-sedoheptulose 7-phosphate + D-glyceraldehyde 3-phosphate = D-erythrose 4-phosphate + beta-D-fructose 6-phosphate. It functions in the pathway carbohydrate degradation; pentose phosphate pathway; D-glyceraldehyde 3-phosphate and beta-D-fructose 6-phosphate from D-ribose 5-phosphate and D-xylulose 5-phosphate (non-oxidative stage): step 2/3. In terms of biological role, transaldolase is important for the balance of metabolites in the pentose-phosphate pathway. In Chlorobaculum tepidum (strain ATCC 49652 / DSM 12025 / NBRC 103806 / TLS) (Chlorobium tepidum), this protein is Probable transaldolase.